Reading from the N-terminus, the 390-residue chain is (S)-8-oxocitronellyl enol synthase CYC2 (390 aa).

Residues 35–37, 63–64, 81–82, 105–106, and Gln-143 contribute to the NADP(+) site; these read TGI, RR, DI, and TW. Residues Lys-147 and Tyr-179 contribute to the active site. Substrate contacts are provided by Lys-147 and Tyr-179. Residues Tyr-179 and 213 to 215 contribute to the NADP(+) site; that span reads SMM.

It belongs to the short-chain dehydrogenases/reductases (SDR) family. Highly divergent.

The enzyme catalyses (S)-8-oxocitronellyl enol + NADP(+) = (6E)-8-oxogeranial + NADPH + H(+). It catalyses the reaction (S)-8-oxocitronellyl enol + NAD(+) = (6E)-8-oxogeranial + NADH + H(+). Iridoid synthase that catalyzes the first step in generation of the iridoid ring scaffold using the linear monoterpene (6E)-8-oxogeranial as substrate. Iridoids comprise a large family of distinctive bicyclic monoterpenes that possess a wide range of pharmacological activities, including anticancer, anti-inflammatory, antifungal and antibacterial activities. The polypeptide is (S)-8-oxocitronellyl enol synthase CYC2 (Camptotheca acuminata (Happy tree)).